Reading from the N-terminus, the 178-residue chain is Probable DNA-directed RNA polymerase subunit delta (178 aa).

In terms of domain architecture, HTH HARE-type spans 14–81 (KSFIDMAYTL…GENLWGLRDW (68 aa)). The tract at residues 114–178 (LGDDDADEDD…AFEDAEDFND (65 aa)) is disordered. Positions 116–178 (DDDADEDDDI…AFEDAEDFND (63 aa)) are enriched in acidic residues.

This sequence belongs to the RpoE family. As to quaternary structure, RNAP is composed of a core of 2 alpha, a beta and a beta' subunits. The core is associated with a delta subunit and one of several sigma factors.

In terms of biological role, participates in both the initiation and recycling phases of transcription. In the presence of the delta subunit, RNAP displays an increased specificity of transcription, a decreased affinity for nucleic acids, and an increased efficiency of RNA synthesis because of enhanced recycling. This is Probable DNA-directed RNA polymerase subunit delta from Staphylococcus epidermidis (strain ATCC 35984 / DSM 28319 / BCRC 17069 / CCUG 31568 / BM 3577 / RP62A).